The following is a 238-amino-acid chain: 3-dehydroquinate dehydratase (238 aa).

3-dehydroquinate contacts are provided by residues 35–37 (ELR) and Arg-70. The Proton donor/acceptor role is filled by His-133. Residue Lys-160 is the Schiff-base intermediate with substrate of the active site. 3-dehydroquinate-binding residues include Arg-202 and Gln-225.

Belongs to the type-I 3-dehydroquinase family. In terms of assembly, homodimer.

It catalyses the reaction 3-dehydroquinate = 3-dehydroshikimate + H2O. The protein operates within metabolic intermediate biosynthesis; chorismate biosynthesis; chorismate from D-erythrose 4-phosphate and phosphoenolpyruvate: step 3/7. Involved in the third step of the chorismate pathway, which leads to the biosynthesis of aromatic amino acids. Catalyzes the cis-dehydration of 3-dehydroquinate (DHQ) and introduces the first double bond of the aromatic ring to yield 3-dehydroshikimate. In Staphylococcus aureus (strain bovine RF122 / ET3-1), this protein is 3-dehydroquinate dehydratase.